Reading from the N-terminus, the 729-residue chain is Ribosomal RNA large subunit methyltransferase K/L (729 aa).

The 112-residue stretch at 47–158 folds into the THUMP domain; that stretch reads TFYRLCLWSR…KNELTLALDL (112 aa).

Belongs to the methyltransferase superfamily. RlmKL family.

It localises to the cytoplasm. It carries out the reaction guanosine(2445) in 23S rRNA + S-adenosyl-L-methionine = N(2)-methylguanosine(2445) in 23S rRNA + S-adenosyl-L-homocysteine + H(+). The enzyme catalyses guanosine(2069) in 23S rRNA + S-adenosyl-L-methionine = N(2)-methylguanosine(2069) in 23S rRNA + S-adenosyl-L-homocysteine + H(+). Functionally, specifically methylates the guanine in position 2445 (m2G2445) and the guanine in position 2069 (m7G2069) of 23S rRNA. This chain is Ribosomal RNA large subunit methyltransferase K/L, found in Dichelobacter nodosus (strain VCS1703A).